The primary structure comprises 204 residues: Thymidine kinase (204 aa).

ATP contacts are provided by residues 15–22 (GSMFSGKS) and 88–91 (DEVQ). The active-site Proton acceptor is Glu89. Positions 145, 148, 183, and 186 each coordinate Zn(2+).

This sequence belongs to the thymidine kinase family. Homotetramer.

The protein localises to the cytoplasm. The catalysed reaction is thymidine + ATP = dTMP + ADP + H(+). This Halalkalibacterium halodurans (strain ATCC BAA-125 / DSM 18197 / FERM 7344 / JCM 9153 / C-125) (Bacillus halodurans) protein is Thymidine kinase.